The chain runs to 900 residues: Serine-rich coiled-coil domain-containing protein 1 (900 aa).

Disordered stretches follow at residues 1 to 100 (MGDS…HSNM) and 156 to 178 (KSEGDDSGFTEDQTRRSVKQSTR). The span at 29 to 56 (LPSSPSSSNTVGVHSSSPSSTNSSSGST) shows a compositional bias: low complexity. The segment covering 81–100 (EPTNQNLSISNGAQPGHSNM) has biased composition (polar residues). Positions 673-707 (MKDECSMLKLQLKEKDELISQLQEELGKVRHLQKA) form a coiled coil.

It belongs to the CCSER family.

This chain is Serine-rich coiled-coil domain-containing protein 1 (CCSER1), found in Homo sapiens (Human).